A 499-amino-acid chain; its full sequence is ADP,ATP carrier protein 5 (499 aa).

11 consecutive transmembrane segments (helical) span residues 25 to 45 (LGKF…QNIL), 61 to 81 (IAGF…VIIY), 93 to 113 (IFYY…FVIY), 148 to 168 (YIVY…LLFW), 183 to 203 (FYTF…FLMM), 223 to 243 (ITLV…CCVL), 286 to 306 (LWLL…VEAV), 327 to 347 (LYIL…NNVM), 356 to 376 (AVIS…LIVF), 380 to 400 (ILSL…VSIG), and 468 to 488 (SISP…IYAV).

Belongs to the ADP/ATP translocase tlc family.

The protein localises to the cell membrane. Its function is as follows. Provides the rickettsial cell with host ATP in exchange for rickettsial ADP. This is an obligate exchange system. This energy acquiring activity is an important component of rickettsial parasitism. The protein is ADP,ATP carrier protein 5 (tlcE) of Rickettsia felis (strain ATCC VR-1525 / URRWXCal2) (Rickettsia azadi).